The primary structure comprises 541 residues: Arginine--tRNA ligase (541 aa).

The 'HIGH' region signature appears at 123 to 133 (ANPTGFLHIGH).

This sequence belongs to the class-I aminoacyl-tRNA synthetase family. As to quaternary structure, monomer.

It localises to the cytoplasm. It carries out the reaction tRNA(Arg) + L-arginine + ATP = L-arginyl-tRNA(Arg) + AMP + diphosphate. This is Arginine--tRNA ligase from Metamycoplasma arthritidis (strain 158L3-1) (Mycoplasma arthritidis).